We begin with the raw amino-acid sequence, 233 residues long: Merozoite surface protein 1 (233 aa).

The N-terminal stretch at 1–19 (MKIIFFLCSFLFFIINTQC) is a signal peptide. The segment covering 58–67 (SGTAVTTSTP) has biased composition (polar residues). Residues 58–110 (SGTAVTTSTPGSKGSVASGGSGGSVASGGSVASGGSGNSRRTNPSDNSSDSDA) form a disordered region. Residues 74 to 94 (ASGGSGGSVASGGSVASGGSG) show a composition bias toward gly residues. Residues 95-107 (NSRRTNPSDNSSD) show a composition bias toward polar residues. Residue asparagine 104 is glycosylated (N-linked (GlcNAc...) asparagine).

In terms of assembly, forms a complex composed of subunits p83, p30, p38, and p42 which remain non-covalently associated; the complex is formed at the merozoite surface prior to egress from host erythrocytes. Forms a complex composed of processed MSP1 subunits, MSP6 subunit p36 and MSP7; the complex is formed at the merozoite surface prior to egress from host erythrocytes. Within the complex, interacts (via subunit p38) with MSP6 subunit p36 and (via subunits p83, p30 and p38) with MSP7 (via subunit p22). Forms a complex composed of MSP1, MSP6, DBLMSP1 and DBLMSP2. Within the complex, interacts (via subunit p38) with DBLMSP1 and DBLMSP2. Forms a complex composed of MSP1, and rhoptry proteins RhopH3, RAP1 and CLAG9/RhopH3. Within the complex, interacts (via subunits p42 and p19) with RhopH3 (via C-terminus). Forms a complex composed of MSP1, MSP6, MSP7, MSP9 and MSP3; within the complex, MSP6 and MSP9 mediate the binding to the host erythrocyte. Interacts (via subunits p19 and p42) with MSP9; the interaction is direct; MSP1 subunits p19 or p42, and MSP9 form a co-ligand complex that interacts with host SLC4A1/Band 3 protein. May interact with PFD6. Interacts with host spectrin. The p190 precursor is cleaved by SUB1 prior to merozoite egress into 4 subunits p83, p30, p38, and p42 which remain non-covalently associated. SUB1-mediated proteolytic cleavage occurs in an orderly manner; the first cleavage occurs at the p83/p30 site, followed by cleavage at the p30/p38 site, the last cleavage occurs at the p38/p42 site. The order of cleavage is essential for parasite viability. SUB1-mediated processing is essential for merozoite egress. In a second processing step during erythrocyte invasion, p42 is cleaved by SUB2 into p33 and p19; the latter remains attached to the merozoite surface via its GPI-anchor and stays on the surface during the subsequent ring stage.

The protein resides in the cell membrane. It localises to the secreted. In terms of biological role, during the asexual blood stage, involved in merozoite egress from host erythrocytes possibly via its interaction with the host cytoskeleton protein spectrin resulting in the destabilization of the host cytoskeleton and thus leading to erythrocyte cell membrane rupture. Involved in the binding to host erythrocytes and is required for host erythrocyte invasion. In Plasmodium falciparum (isolate CDC / Honduras), this protein is Merozoite surface protein 1.